The sequence spans 424 residues: Histidine--tRNA ligase (424 aa).

Belongs to the class-II aminoacyl-tRNA synthetase family. Homodimer.

It is found in the cytoplasm. The catalysed reaction is tRNA(His) + L-histidine + ATP = L-histidyl-tRNA(His) + AMP + diphosphate + H(+). In Shigella flexneri, this protein is Histidine--tRNA ligase.